A 306-amino-acid chain; its full sequence is tRNA pseudouridine synthase B (306 aa).

D48 functions as the Nucleophile in the catalytic mechanism.

This sequence belongs to the pseudouridine synthase TruB family. Type 1 subfamily.

It carries out the reaction uridine(55) in tRNA = pseudouridine(55) in tRNA. In terms of biological role, responsible for synthesis of pseudouridine from uracil-55 in the psi GC loop of transfer RNAs. In Haemophilus influenzae (strain PittEE), this protein is tRNA pseudouridine synthase B.